Reading from the N-terminus, the 364-residue chain is MSDGKDSLDLSGLGAAVPNAKELSAEDKANLVESIKNTLQGLAARHTDVLESLEPKVRKRVEVLREIQSQHDDLEAKFFEERAALEAKYQKMYEPLYSKRYEIVNGVVEVDGVTKEAADETPAEQKEEKGVPEFWLNAMKNHEILSEEIQERDEEALKYLKDIKWYRISEPKGFKLEFYFDTNPFFKNSVLTKTYHMIDEDEPILEKAIGTEIEWFPGKCLTQKVLKKKPKKGSKNTKPITKTENCESFFNFFSPPQVPDDDEEIDEDTAEQLQNQMEQDYDIGSTIRDKIIPHAVSWFTGEAAQDEDFEGIMDDEDDDDEDDDDDEDEDDEGDDEDDEDEKKGGRVPAGEGQQGERPAECKQQ.

Residues 32–86 (VESIKNTLQGLAARHTDVLESLEPKVRKRVEVLREIQSQHDDLEAKFFEERAALE) are a coiled coil. Positions 53–68 (LEPKVRKRVEVLREIQ) match the Nuclear export signal motif. Positions 227-232 (KKKPKK) match the Nuclear localization signal motif. Disordered stretches follow at residues 250-269 (FNFFSPPQVPDDDEEIDEDT) and 301-364 (GEAA…CKQQ). 2 stretches are compositionally biased toward acidic residues: residues 259 to 269 (PDDDEEIDEDT) and 304 to 340 (AQDEDFEGIMDDEDDDDEDDDDDEDEDDEGDDEDDED). Cysteine 361 is subject to Cysteine methyl ester. A lipid anchor (S-farnesyl cysteine) is attached at cysteine 361. Positions 362 to 364 (KQQ) are cleaved as a propeptide — removed in mature form.

It belongs to the nucleosome assembly protein (NAP) family.

It is found in the nucleus. The protein localises to the cytoplasm. May modulate chromatin structure by regulation of nucleosome assembly/disassembly. The sequence is that of Nucleosome assembly protein 1;2 (NAP1;2) from Oryza sativa subsp. japonica (Rice).